We begin with the raw amino-acid sequence, 26 residues long: Halocyntin (26 aa).

Its function is as follows. Has strong antibacterial activity against the Gram-positive bacteria M.luteus, S.aureus, B.megaterium, A.viridans and E.faecalis, and against the Gram-negative bacterium K.pneumoniae. Has less potent antibacterial activity against the Gram-negative bacteria E.coli DH5alpha, S.typhimurium, P.aeruginosa, E.aerogenes and N.gonorrhoeae. Has moderate hemolytic activity against sheep erythrocytes. In Halocynthia papillosa (Red sea-squirt), this protein is Halocyntin.